The following is a 196-amino-acid chain: Elongation factor Ts (196 aa).

An involved in Mg(2+) ion dislocation from EF-Tu region spans residues 80–83 (TDFV).

The protein belongs to the EF-Ts family.

It localises to the cytoplasm. Functionally, associates with the EF-Tu.GDP complex and induces the exchange of GDP to GTP. It remains bound to the aminoacyl-tRNA.EF-Tu.GTP complex up to the GTP hydrolysis stage on the ribosome. The sequence is that of Elongation factor Ts from Desulfotalea psychrophila (strain LSv54 / DSM 12343).